The primary structure comprises 207 residues: Histidine biosynthesis bifunctional protein HisIE (207 aa).

The tract at residues 1–117 (MQNFKELNEK…KISKNADFVF (117 aa)) is phosphoribosyl-AMP cyclohydrolase. Residues 118–207 (LARLEKLINA…ISKLKERHKA (90 aa)) are phosphoribosyl-ATP pyrophosphohydrolase.

It in the N-terminal section; belongs to the PRA-CH family. In the C-terminal section; belongs to the PRA-PH family.

Its subcellular location is the cytoplasm. The catalysed reaction is 1-(5-phospho-beta-D-ribosyl)-ATP + H2O = 1-(5-phospho-beta-D-ribosyl)-5'-AMP + diphosphate + H(+). It carries out the reaction 1-(5-phospho-beta-D-ribosyl)-5'-AMP + H2O = 1-(5-phospho-beta-D-ribosyl)-5-[(5-phospho-beta-D-ribosylamino)methylideneamino]imidazole-4-carboxamide. It participates in amino-acid biosynthesis; L-histidine biosynthesis; L-histidine from 5-phospho-alpha-D-ribose 1-diphosphate: step 2/9. Its pathway is amino-acid biosynthesis; L-histidine biosynthesis; L-histidine from 5-phospho-alpha-D-ribose 1-diphosphate: step 3/9. In Campylobacter jejuni subsp. jejuni serotype O:2 (strain ATCC 700819 / NCTC 11168), this protein is Histidine biosynthesis bifunctional protein HisIE (hisI).